The sequence spans 392 residues: MTLLGTALRPAATRVMLLGSGELGKEVAIECQRLGVEVIAVDRYADAPAMHVAHRSHVINMLDGDALRRVVELEKPHYIVPEIEAIATDMLIQLEEEGLNVVPCARATKLTMNREGIRRLAAEELQLPTSTYRFADSESLFREAVAAIGYPCIVKPVMSSSGKGQTFIRSAEQLAQAWEYAQQGGRAGAGRVIVEGVVKFDFEITLLTVSAVDGVHFCAPVGHRQEDGDYCESWQPQQMSPLALERAQEIARKVVLALGGYGLFGVELFVCGDEVIFSEVSPRPHDTGMVTLISQDLSEFALHVRAFLGLPVGGIRQYGPAASAVILPQLTSQNVTFDNVQNAVGADLQIRLFGKPEIDGSRRLGVALATAESVVDAIERAKHAAGQVKVQG.

N(1)-(5-phospho-beta-D-ribosyl)glycinamide is bound by residues 22 to 23 (EL) and glutamate 82. ATP-binding positions include arginine 114, lysine 155, 160-165 (SSGKGQ), 195-198 (EGVV), and glutamate 203. Positions 119–308 (RLAAEELQLP…EFALHVRAFL (190 aa)) constitute an ATP-grasp domain. Residues glutamate 267 and glutamate 279 each contribute to the Mg(2+) site. Residues aspartate 286, lysine 355, and 362–363 (RR) contribute to the N(1)-(5-phospho-beta-D-ribosyl)glycinamide site.

Belongs to the PurK/PurT family. Homodimer.

It carries out the reaction N(1)-(5-phospho-beta-D-ribosyl)glycinamide + formate + ATP = N(2)-formyl-N(1)-(5-phospho-beta-D-ribosyl)glycinamide + ADP + phosphate + H(+). Its pathway is purine metabolism; IMP biosynthesis via de novo pathway; N(2)-formyl-N(1)-(5-phospho-D-ribosyl)glycinamide from N(1)-(5-phospho-D-ribosyl)glycinamide (formate route): step 1/1. Functionally, involved in the de novo purine biosynthesis. Catalyzes the transfer of formate to 5-phospho-ribosyl-glycinamide (GAR), producing 5-phospho-ribosyl-N-formylglycinamide (FGAR). Formate is provided by PurU via hydrolysis of 10-formyl-tetrahydrofolate. The protein is Formate-dependent phosphoribosylglycinamide formyltransferase of Escherichia coli O157:H7.